A 472-amino-acid polypeptide reads, in one-letter code: Alkaline phosphatase (472 aa).

An N-terminal signal peptide occupies residues Met-1 to Ala-21. Asp-74 contacts Mg(2+). Asp-74 serves as a coordination point for Zn(2+). Ser-125 functions as the Phosphoserine intermediate in the catalytic mechanism. Mg(2+)-binding residues include Asp-176 and Thr-178. 2 disulfides stabilise this stretch: Cys-191/Cys-201 and Cys-309/Cys-359. Position 345 (Glu-345) interacts with Mg(2+). Residues Asp-350, His-354, Asp-392, His-393, and His-435 each coordinate Zn(2+).

Belongs to the alkaline phosphatase family. In terms of assembly, homodimer. Mg(2+) is required as a cofactor. The cofactor is Zn(2+).

Its subcellular location is the periplasm. It carries out the reaction a phosphate monoester + H2O = an alcohol + phosphate. In Escherichia fergusonii (strain ATCC 35469 / DSM 13698 / CCUG 18766 / IAM 14443 / JCM 21226 / LMG 7866 / NBRC 102419 / NCTC 12128 / CDC 0568-73), this protein is Alkaline phosphatase (phoA).